The following is a 610-amino-acid chain: UvrABC system protein C (610 aa).

The GIY-YIG domain occupies 12–91 (TSPGVYLYKN…IKQKKPRFNI (80 aa)). One can recognise a UVR domain in the interval 202–237 (SDLKQSLTARMNKAAEGMQFELAAKYRDLITTVEDL).

The protein belongs to the UvrC family. In terms of assembly, interacts with UvrB in an incision complex.

It is found in the cytoplasm. Functionally, the UvrABC repair system catalyzes the recognition and processing of DNA lesions. UvrC both incises the 5' and 3' sides of the lesion. The N-terminal half is responsible for the 3' incision and the C-terminal half is responsible for the 5' incision. This Koribacter versatilis (strain Ellin345) protein is UvrABC system protein C.